A 554-amino-acid chain; its full sequence is Arginine--tRNA ligase (554 aa).

The short motif at 129 to 139 (ANPTGPLHIGH) is the 'HIGH' region element.

It belongs to the class-I aminoacyl-tRNA synthetase family. In terms of assembly, monomer.

It is found in the cytoplasm. The enzyme catalyses tRNA(Arg) + L-arginine + ATP = L-arginyl-tRNA(Arg) + AMP + diphosphate. The polypeptide is Arginine--tRNA ligase (Citrifermentans bemidjiense (strain ATCC BAA-1014 / DSM 16622 / JCM 12645 / Bem) (Geobacter bemidjiensis)).